Consider the following 191-residue polypeptide: Protein RER1A (191 aa).

Met1 bears the N-acetylmethionine mark. 4 helical membrane-spanning segments follow: residues 39 to 57 (YRWIGTLVVALIYCLRVYY), 60 to 80 (GFYIIAYGLGIYLLNLLIGFL), 115 to 135 (FKFWYSMTKAFCIAFLMTFFS), and 136 to 156 (VFDVPVFWPILLCYWIVLFVL).

It belongs to the RER1 family.

It localises to the membrane. Its function is as follows. Involved in the retrieval of endoplasmic reticulum membrane proteins from the early Golgi compartment. This is Protein RER1A (RER1A) from Arabidopsis thaliana (Mouse-ear cress).